Reading from the N-terminus, the 1957-residue chain is Sporulation-specific protein 15 (1957 aa).

2 stretches are compositionally biased toward low complexity: residues 1–12 (MSNQSSSGSNTS) and 19–28 (ASSLVSSAAS). Positions 1–102 (MSNQSSSGSN…STASSALPLT (102 aa)) are disordered. A compositionally biased stretch (basic and acidic residues) spans 58-83 (SQHEDSSEELKRQEVRGMRRHSDLSI). Over residues 90–102 (SEGSTASSALPLT) the composition is skewed to polar residues. Ser105 carries the phosphoserine modification. Coiled-coil stretches lie at residues 199 to 785 (KQSE…FTSL), 804 to 1235 (VNMQ…DLLD), 1320 to 1471 (KVVA…SLDD), and 1481 to 1723 (EKLG…EQHE).

It belongs to the MPC70 family. As to quaternary structure, monomer.

It localises to the cytoplasm. The protein localises to the cytoskeleton. Its subcellular location is the microtubule organizing center. It is found in the spindle pole body. Its function is as follows. Has a role in the initiation of spore membrane formation. This is Sporulation-specific protein 15 (spo15) from Schizosaccharomyces pombe (strain 972 / ATCC 24843) (Fission yeast).